Reading from the N-terminus, the 53-residue chain is Small ribosomal subunit protein uS14 (53 aa).

Residues cysteine 18, cysteine 21, cysteine 36, and cysteine 39 each contribute to the Zn(2+) site.

This sequence belongs to the universal ribosomal protein uS14 family. Zinc-binding uS14 subfamily. In terms of assembly, part of the 30S ribosomal subunit. It depends on Zn(2+) as a cofactor.

Functionally, binds 16S rRNA, required for the assembly of 30S particles. The sequence is that of Small ribosomal subunit protein uS14 from Thermoplasma volcanium (strain ATCC 51530 / DSM 4299 / JCM 9571 / NBRC 15438 / GSS1).